We begin with the raw amino-acid sequence, 348 residues long: N-acetyl-gamma-glutamyl-phosphate reductase (348 aa).

The active site involves Cys151.

The protein belongs to the NAGSA dehydrogenase family. Type 1 subfamily.

The protein resides in the cytoplasm. It catalyses the reaction N-acetyl-L-glutamate 5-semialdehyde + phosphate + NADP(+) = N-acetyl-L-glutamyl 5-phosphate + NADPH + H(+). It participates in amino-acid biosynthesis; L-arginine biosynthesis; N(2)-acetyl-L-ornithine from L-glutamate: step 3/4. Catalyzes the NADPH-dependent reduction of N-acetyl-5-glutamyl phosphate to yield N-acetyl-L-glutamate 5-semialdehyde. The chain is N-acetyl-gamma-glutamyl-phosphate reductase from Lachnospira eligens (strain ATCC 27750 / DSM 3376 / VPI C15-48 / C15-B4) (Eubacterium eligens).